Consider the following 215-residue polypeptide: Probable transaldolase (215 aa).

The Schiff-base intermediate with substrate role is filled by K83.

The protein belongs to the transaldolase family. Type 3B subfamily.

Its subcellular location is the cytoplasm. It catalyses the reaction D-sedoheptulose 7-phosphate + D-glyceraldehyde 3-phosphate = D-erythrose 4-phosphate + beta-D-fructose 6-phosphate. It functions in the pathway carbohydrate degradation; pentose phosphate pathway; D-glyceraldehyde 3-phosphate and beta-D-fructose 6-phosphate from D-ribose 5-phosphate and D-xylulose 5-phosphate (non-oxidative stage): step 2/3. Transaldolase is important for the balance of metabolites in the pentose-phosphate pathway. The sequence is that of Probable transaldolase from Pelotomaculum thermopropionicum (strain DSM 13744 / JCM 10971 / SI).